A 193-amino-acid polypeptide reads, in one-letter code: Capsid protein (193 aa).

Its subcellular location is the virion. The sequence is that of Capsid protein from Apple chlorotic leaf spot virus (isolate apple) (ACLSV).